We begin with the raw amino-acid sequence, 154 residues long: Large ribosomal subunit protein uL22c (154 aa).

The protein belongs to the universal ribosomal protein uL22 family. Part of the 50S ribosomal subunit.

It localises to the plastid. The protein localises to the chloroplast. Its function is as follows. This protein binds specifically to 23S rRNA. Functionally, the globular domain of the protein is located near the polypeptide exit tunnel on the outside of the subunit, while an extended beta-hairpin is found that lines the wall of the exit tunnel in the center of the 70S ribosome. The sequence is that of Large ribosomal subunit protein uL22c (rpl22) from Guizotia abyssinica (Niger).